Consider the following 285-residue polypeptide: RNA polymerase sigma factor RpoH (285 aa).

Positions 53–122 (LILSHLRFVV…IHEYVLRNWR (70 aa)) are sigma-70 factor domain-2. Positions 77-80 (DLIQ) match the Interaction with polymerase core subunit RpoC motif. Residues 229-281 (AMEGLDERSQDIIRARWLDEDNKSTLQELADRYGVSAERVRQLEKNAMKKLRA) form a sigma-70 factor domain-4 region. Positions 254-273 (LQELADRYGVSAERVRQLEK) form a DNA-binding region, H-T-H motif.

The protein belongs to the sigma-70 factor family. RpoH subfamily. In terms of assembly, interacts with the RNA polymerase core enzyme.

Its subcellular location is the cytoplasm. Functionally, sigma factors are initiation factors that promote the attachment of RNA polymerase to specific initiation sites and are then released. This sigma factor is involved in regulation of expression of heat shock genes. The polypeptide is RNA polymerase sigma factor RpoH (Enterobacter cloacae).